The primary structure comprises 156 residues: S-ribosylhomocysteine lyase (156 aa).

Fe cation contacts are provided by histidine 56, histidine 60, and cysteine 123.

The protein belongs to the LuxS family. Homodimer. The cofactor is Fe cation.

It catalyses the reaction S-(5-deoxy-D-ribos-5-yl)-L-homocysteine = (S)-4,5-dihydroxypentane-2,3-dione + L-homocysteine. In terms of biological role, involved in the synthesis of autoinducer 2 (AI-2) which is secreted by bacteria and is used to communicate both the cell density and the metabolic potential of the environment. The regulation of gene expression in response to changes in cell density is called quorum sensing. Catalyzes the transformation of S-ribosylhomocysteine (RHC) to homocysteine (HC) and 4,5-dihydroxy-2,3-pentadione (DPD). The polypeptide is S-ribosylhomocysteine lyase (Staphylococcus aureus (strain Mu3 / ATCC 700698)).